The chain runs to 428 residues: Serine--tRNA ligase (428 aa).

231–233 (TSE) is an L-serine binding site. Residues 262–264 (RRE) and Val-278 contribute to the ATP site. Position 285 (Glu-285) interacts with L-serine. 349 to 352 (ELTS) is an ATP binding site. Thr-384 is a binding site for L-serine.

It belongs to the class-II aminoacyl-tRNA synthetase family. Type-1 seryl-tRNA synthetase subfamily. Homodimer. The tRNA molecule binds across the dimer.

It localises to the cytoplasm. It catalyses the reaction tRNA(Ser) + L-serine + ATP = L-seryl-tRNA(Ser) + AMP + diphosphate + H(+). It carries out the reaction tRNA(Sec) + L-serine + ATP = L-seryl-tRNA(Sec) + AMP + diphosphate + H(+). Its pathway is aminoacyl-tRNA biosynthesis; selenocysteinyl-tRNA(Sec) biosynthesis; L-seryl-tRNA(Sec) from L-serine and tRNA(Sec): step 1/1. In terms of biological role, catalyzes the attachment of serine to tRNA(Ser). Is also able to aminoacylate tRNA(Sec) with serine, to form the misacylated tRNA L-seryl-tRNA(Sec), which will be further converted into selenocysteinyl-tRNA(Sec). This Bifidobacterium animalis subsp. lactis (strain AD011) protein is Serine--tRNA ligase.